The following is a 190-amino-acid chain: Putative hydrolase YdeN (190 aa).

Catalysis depends on charge relay system residues S71, D137, and H164.

It belongs to the RBBP9 family.

In Bacillus subtilis (strain 168), this protein is Putative hydrolase YdeN (ydeN).